The following is a 362-amino-acid chain: Chorismate synthase (362 aa).

Arg48 and Arg54 together coordinate NADP(+). Residues 125 to 127 (RSS), 238 to 239 (NA), Gly278, 293 to 297 (KPTSS), and Arg319 each bind FMN.

Belongs to the chorismate synthase family. In terms of assembly, homotetramer. Requires FMNH2 as cofactor.

It carries out the reaction 5-O-(1-carboxyvinyl)-3-phosphoshikimate = chorismate + phosphate. It functions in the pathway metabolic intermediate biosynthesis; chorismate biosynthesis; chorismate from D-erythrose 4-phosphate and phosphoenolpyruvate: step 7/7. Its function is as follows. Catalyzes the anti-1,4-elimination of the C-3 phosphate and the C-6 proR hydrogen from 5-enolpyruvylshikimate-3-phosphate (EPSP) to yield chorismate, which is the branch point compound that serves as the starting substrate for the three terminal pathways of aromatic amino acid biosynthesis. This reaction introduces a second double bond into the aromatic ring system. In Psychromonas ingrahamii (strain DSM 17664 / CCUG 51855 / 37), this protein is Chorismate synthase.